The primary structure comprises 111 residues: Nucleoid-associated protein PFL_1905 (111 aa).

Disordered stretches follow at residues 1-20 (MKGG…EKMA) and 88-111 (SNSQ…KLPF).

Belongs to the YbaB/EbfC family. In terms of assembly, homodimer.

It is found in the cytoplasm. Its subcellular location is the nucleoid. In terms of biological role, binds to DNA and alters its conformation. May be involved in regulation of gene expression, nucleoid organization and DNA protection. This chain is Nucleoid-associated protein PFL_1905, found in Pseudomonas fluorescens (strain ATCC BAA-477 / NRRL B-23932 / Pf-5).